The sequence spans 599 residues: Elongation factor 4 (599 aa).

The region spanning 2–185 is the tr-type G domain; it reads KYIRNFSIIA…RIIIDIPVPQ (184 aa). Residues 14–19 and 132–135 each bind GTP; these read NHGKST and NKID.

The protein belongs to the TRAFAC class translation factor GTPase superfamily. Classic translation factor GTPase family. LepA subfamily.

The protein resides in the cell inner membrane. It catalyses the reaction GTP + H2O = GDP + phosphate + H(+). In terms of biological role, required for accurate and efficient protein synthesis under certain stress conditions. May act as a fidelity factor of the translation reaction, by catalyzing a one-codon backward translocation of tRNAs on improperly translocated ribosomes. Back-translocation proceeds from a post-translocation (POST) complex to a pre-translocation (PRE) complex, thus giving elongation factor G a second chance to translocate the tRNAs correctly. Binds to ribosomes in a GTP-dependent manner. In Blochmanniella floridana, this protein is Elongation factor 4.